We begin with the raw amino-acid sequence, 417 residues long: Proteasome-activating nucleotidase (417 aa).

Positions 24 to 78 (SKYLLDRVKQLEERNVRLKEEYRKIELEKKSVENKKVQYEREIRKLTSELDRLKT) form a coiled coil. Residues 203 to 208 (GTGKTL) and histidine 342 each bind ATP. Residues 415–417 (MFA) are docks into pockets in the proteasome alpha-ring to cause gate opening.

Belongs to the AAA ATPase family. As to quaternary structure, homohexamer. The hexameric complex has a two-ring architecture resembling a top hat that caps the 20S proteasome core at one or both ends. Upon ATP-binding, the C-terminus of PAN interacts with the alpha-rings of the proteasome core by binding to the intersubunit pockets.

The protein resides in the cytoplasm. Its function is as follows. ATPase which is responsible for recognizing, binding, unfolding and translocation of substrate proteins into the archaeal 20S proteasome core particle. Is essential for opening the gate of the 20S proteasome via an interaction with its C-terminus, thereby allowing substrate entry and access to the site of proteolysis. Thus, the C-termini of the proteasomal ATPase function like a 'key in a lock' to induce gate opening and therefore regulate proteolysis. Unfolding activity requires energy from ATP hydrolysis, whereas ATP binding alone promotes ATPase-20S proteasome association which triggers gate opening, and supports translocation of unfolded substrates. This Methanocella arvoryzae (strain DSM 22066 / NBRC 105507 / MRE50) protein is Proteasome-activating nucleotidase.